Here is a 229-residue protein sequence, read N- to C-terminus: 7-cyano-7-deazaguanine synthase (229 aa).

Leu-15–Val-25 provides a ligand contact to ATP. Zn(2+)-binding residues include Cys-194, Cys-204, Cys-207, and Cys-210.

The protein belongs to the QueC family. Requires Zn(2+) as cofactor.

The catalysed reaction is 7-carboxy-7-deazaguanine + NH4(+) + ATP = 7-cyano-7-deazaguanine + ADP + phosphate + H2O + H(+). It functions in the pathway purine metabolism; 7-cyano-7-deazaguanine biosynthesis. Catalyzes the ATP-dependent conversion of 7-carboxy-7-deazaguanine (CDG) to 7-cyano-7-deazaguanine (preQ(0)). This chain is 7-cyano-7-deazaguanine synthase, found in Pseudomonas savastanoi pv. phaseolicola (strain 1448A / Race 6) (Pseudomonas syringae pv. phaseolicola (strain 1448A / Race 6)).